Here is a 466-residue protein sequence, read N- to C-terminus: 3-isopropylmalate dehydratase large subunit (466 aa).

Residues Cys-349, Cys-410, and Cys-413 each coordinate [4Fe-4S] cluster.

This sequence belongs to the aconitase/IPM isomerase family. LeuC type 1 subfamily. In terms of assembly, heterodimer of LeuC and LeuD. [4Fe-4S] cluster is required as a cofactor.

It catalyses the reaction (2R,3S)-3-isopropylmalate = (2S)-2-isopropylmalate. The protein operates within amino-acid biosynthesis; L-leucine biosynthesis; L-leucine from 3-methyl-2-oxobutanoate: step 2/4. In terms of biological role, catalyzes the isomerization between 2-isopropylmalate and 3-isopropylmalate, via the formation of 2-isopropylmaleate. The polypeptide is 3-isopropylmalate dehydratase large subunit (Vesicomyosocius okutanii subsp. Calyptogena okutanii (strain HA)).